A 995-amino-acid polypeptide reads, in one-letter code: Serine-aspartate repeat-containing protein C (995 aa).

Positions 1–50 (MNNKKTATNRKGMIPNRLNKFSIRKYSVGTASILVGTTLIFGLSGHEAKA) are cleaved as a signal peptide. A YSIRK-G/S signaling motif motif is present at residues 21-32 (FSIRKYSVGTAS). The segment at 51-164 (AEHTNGELNQ…STTPKTTTIK (114 aa)) is disordered. Positions 51–495 (AEHTNGELNQ…GSSTANGDQK (445 aa)) are ligand binding A region. The segment covering 56–71 (GELNQSKNETTAPSEN) has biased composition (polar residues). The segment covering 72–83 (KTTKKVDSRQLK) has biased composition (basic and acidic residues). The span at 84 to 155 (DNTQTATADQ…SNLTQAKDVS (72 aa)) shows a compositional bias: polar residues. CNA-B domains follow at residues 496–606 (KYNL…YKTP) and 607–717 (KYSL…EEET). Positions 678-975 (TQTGTNTTED…NNSNNGTLFG (298 aa)) are disordered. Acidic residues-rich tracts occupy residues 685-695 (TEDDKDADGGE) and 712-934 (YYEE…DSDS). Positions 958 to 962 (LPETG) match the LPXTG sorting signal motif. Residues 960–975 (ETGSENNNSNNGTLFG) are compositionally biased toward low complexity. T961 carries the pentaglycyl murein peptidoglycan amidated threonine modification. A propeptide spans 962-995 (GSENNNSNNGTLFGGLFAALGSLLLFGRRKKQNK) (removed by sortase).

It belongs to the serine-aspartate repeat-containing protein (SDr) family. As to quaternary structure, homodimerizes; via N2-Domain. Interacts with host NRXN1; this interaction mediates bacterial attachment to host cells.

It is found in the secreted. The protein resides in the cell wall. Its function is as follows. Cell surface-associated calcium-binding protein which plays an important role in adhesion and pathogenesis. Mediates interactions with components of the extracellular matrix such as host NRXN1 to promote bacterial adhesion. The chain is Serine-aspartate repeat-containing protein C (sdrC) from Staphylococcus aureus (strain NCTC 8325 / PS 47).